The chain runs to 342 residues: Probable dual-specificity RNA methyltransferase RlmN (342 aa).

Residue Glu91 is the Proton acceptor of the active site. One can recognise a Radical SAM core domain in the interval 97–326; it reads YKFGNTACVS…CTVRRELGSD (230 aa). Cys104 and Cys331 are disulfide-bonded. The [4Fe-4S] cluster site is built by Cys111, Cys115, and Cys118. Residues 157–158, Ser189, 212–214, and Asn288 contribute to the S-adenosyl-L-methionine site; these read GE and SLH. Cys331 acts as the S-methylcysteine intermediate in catalysis.

Belongs to the radical SAM superfamily. RlmN family. [4Fe-4S] cluster is required as a cofactor.

The protein localises to the cytoplasm. The catalysed reaction is adenosine(2503) in 23S rRNA + 2 reduced [2Fe-2S]-[ferredoxin] + 2 S-adenosyl-L-methionine = 2-methyladenosine(2503) in 23S rRNA + 5'-deoxyadenosine + L-methionine + 2 oxidized [2Fe-2S]-[ferredoxin] + S-adenosyl-L-homocysteine. The enzyme catalyses adenosine(37) in tRNA + 2 reduced [2Fe-2S]-[ferredoxin] + 2 S-adenosyl-L-methionine = 2-methyladenosine(37) in tRNA + 5'-deoxyadenosine + L-methionine + 2 oxidized [2Fe-2S]-[ferredoxin] + S-adenosyl-L-homocysteine. Its function is as follows. Specifically methylates position 2 of adenine 2503 in 23S rRNA and position 2 of adenine 37 in tRNAs. The protein is Probable dual-specificity RNA methyltransferase RlmN of Caldanaerobacter subterraneus subsp. tengcongensis (strain DSM 15242 / JCM 11007 / NBRC 100824 / MB4) (Thermoanaerobacter tengcongensis).